We begin with the raw amino-acid sequence, 163 residues long: Nucleotide-binding protein PM1656 (163 aa).

This sequence belongs to the YajQ family.

Its function is as follows. Nucleotide-binding protein. This is Nucleotide-binding protein PM1656 from Pasteurella multocida (strain Pm70).